A 606-amino-acid chain; its full sequence is DNA primase (606 aa).

The CHC2-type zinc-finger motif lies at 40–64 (CPFHQEKTPSFYVVPEKRFYFCHGC). Residues 256–349 (KAAVLVEGYF…DPDTFARREG (94 aa)) form the Toprim domain. Mg(2+)-binding residues include glutamate 262, aspartate 307, and aspartate 309. The segment at 429-451 (VPLPKPAGGDAPPSSPNRPAPPL) is disordered. The span at 441-451 (PSSPNRPAPPL) shows a compositional bias: pro residues.

This sequence belongs to the DnaG primase family. Monomer. Interacts with DnaB. The cofactor is Zn(2+). Requires Mg(2+) as cofactor.

The catalysed reaction is ssDNA + n NTP = ssDNA/pppN(pN)n-1 hybrid + (n-1) diphosphate.. Its function is as follows. RNA polymerase that catalyzes the synthesis of short RNA molecules used as primers for DNA polymerase during DNA replication. The sequence is that of DNA primase from Myxococcus xanthus.